The following is a 199-amino-acid chain: Recombination protein RecR (199 aa).

A C4-type zinc finger spans residues 58–73 (CRRCFNLTEGEECDIC). A Toprim domain is found at 81–176 (SVICVVEDPY…RVTALASGLP (96 aa)).

It belongs to the RecR family.

Functionally, may play a role in DNA repair. It seems to be involved in an RecBC-independent recombinational process of DNA repair. It may act with RecF and RecO. The protein is Recombination protein RecR of Rubrobacter xylanophilus (strain DSM 9941 / JCM 11954 / NBRC 16129 / PRD-1).